The following is a 317-amino-acid chain: 1-phosphatidylinositol phosphodiesterase (317 aa).

An N-terminal signal peptide occupies residues 1 to 22 (MYKNYLQRTLVLLLCFILYFFT). In terms of domain architecture, PI-PLC X-box spans 58 to 196 (LAALSIPGTH…LKDVRGKILL (139 aa)). His-67 functions as the Proton acceptor in the catalytic mechanism. His-115 (proton donor) is an active-site residue.

As to quaternary structure, monomer.

It localises to the secreted. The protein localises to the cytoplasm. It carries out the reaction a 1,2-diacyl-sn-glycero-3-phospho-(1D-myo-inositol) = 1D-myo-inositol 1,2-cyclic phosphate + a 1,2-diacyl-sn-glycerol. Its function is as follows. Cleaves glycosylphosphatidylinositol (GPI) and phosphatidylinositol (PI) anchors but not PI phosphates. Important factor in pathogenesis, PI-PLC activity is present only in virulent listeria species. It may participate in the lysis of the phagolysosomal membrane. This chain is 1-phosphatidylinositol phosphodiesterase (plcA), found in Listeria monocytogenes serovar 1/2a (strain ATCC BAA-679 / EGD-e).